The sequence spans 186 residues: Ribosome-recycling factor (186 aa).

It belongs to the RRF family.

The protein localises to the cytoplasm. Its function is as follows. Responsible for the release of ribosomes from messenger RNA at the termination of protein biosynthesis. May increase the efficiency of translation by recycling ribosomes from one round of translation to another. This is Ribosome-recycling factor from Chlorobaculum tepidum (strain ATCC 49652 / DSM 12025 / NBRC 103806 / TLS) (Chlorobium tepidum).